The following is a 356-amino-acid chain: MSL complex subunit 3B (356 aa).

The 349-residue stretch at 2–350 folds into the MRG domain; it reads EERTVTLEIP…SEVHYSTRNP (349 aa). Disordered regions lie at residues 135 to 210 and 225 to 247; these read TNRS…WQQD and KTPV…SPVF. Residues 142-156 show a composition bias toward low complexity; it reads LSPSLRLLNPSRPQS. Composition is skewed to polar residues over residues 178–189 and 229–243; these read AVQSLRRSSPHT and HSRS…SQEG.

Its subcellular location is the nucleus. Functionally, probable non-catalytic component of the MSL histone acetyltransferase complex, a multiprotein complex that mediates the majority of histone H4 acetylation at 'Lys-16' (H4K16ac), an epigenetic mark that prevents chromatin compaction. This is MSL complex subunit 3B from Homo sapiens (Human).